Reading from the N-terminus, the 653-residue chain is Chaperone protein DnaK (653 aa).

Threonine 198 carries the phosphothreonine; by autocatalysis modification. A compositionally biased stretch (low complexity) spans 608 to 617; it reads DPEAAAHAAG. The disordered stretch occupies residues 608–653; that stretch reads DPEAAAHAAGMHGGAATGGGDGANKHGKGAEDVVEAEFEEVNDDKK. Over residues 618–629 the composition is skewed to gly residues; it reads MHGGAATGGGDG. Acidic residues predominate over residues 639–653; that stretch reads DVVEAEFEEVNDDKK.

The protein belongs to the heat shock protein 70 family.

Functionally, acts as a chaperone. This Magnetococcus marinus (strain ATCC BAA-1437 / JCM 17883 / MC-1) protein is Chaperone protein DnaK.